The chain runs to 1125 residues: Transient receptor potential cation channel subfamily A member 1 (1125 aa).

At Met-1–His-721 the chain is on the cytoplasmic side. 9 ANK repeats span residues Glu-63 to Ile-94, Tyr-98 to Leu-127, Asn-131 to Leu-161, Asn-165 to Lys-194, Trp-198 to Tyr-227, Lys-239 to Met-268, Ala-272 to Asp-301, Asn-309 to Ser-338, and Glu-342 to Ile-371. 5 disulfide bridges follow: Cys-193-Cys-666, Cys-463-Cys-666, Cys-609-Cys-622, Cys-622-Cys-666, and Cys-634-Cys-859. A 4-hydroxyproline; transient modification is found at Pro-395. ANK repeat units lie at residues Asp-413–Ser-442, Asp-446–Leu-475, His-482–Ser-511, Asn-514–Asp-543, and Glu-548–Leu-577. 2 residues coordinate (E)-cinnamaldehyde: Cys-415 and Cys-422. Cys-622 contributes to the (E)-cinnamaldehyde binding site. A Cysteine sulfenic acid (-SOH); transient; in hyperoxia modification is found at Cys-634. The (E)-cinnamaldehyde site is built by Cys-642, Cys-666, and Lys-712. Residues Met-722–Ile-742 traverse the membrane as a helical segment. Residues Gln-743 to Thr-767 lie on the Extracellular side of the membrane. 2 N-linked (GlcNAc...) asparagine glycosylation sites follow: Asn-749 and Asn-755. A helical membrane pass occupies residues Leu-768 to Tyr-788. The Cytoplasmic segment spans residues Cys-789–Tyr-806. Glu-791, Gln-794, Asn-808, and Glu-811 together coordinate Ca(2+). Residues Asn-807–Leu-827 traverse the membrane as a helical segment. At Asn-828–Tyr-832 the chain is on the extracellular side. A helical transmembrane segment spans residues Met-833–Leu-853. Residues Gln-854–Ser-876 are Cytoplasmic-facing. Position 859 is a cysteine sulfenic acid (-SOH); transient; in hyperoxia (Cys-859). A helical transmembrane segment spans residues Thr-877–Phe-897. The Extracellular segment spans residues Gln-898–Pro-904. The pore-forming intramembrane region spans Leu-905–Phe-925. Over Leu-926 to Pro-937 the chain is Extracellular. A helical membrane pass occupies residues Val-938–Leu-959. Topologically, residues Ile-960–Phe-1125 are cytoplasmic. A coiled-coil region spans residues Met-1044–Lys-1073. Lys-1048–Lys-1054 contacts a 1,2-diacyl-sn-glycero-3-phospho-(1D-myo-inositol).

It belongs to the transient receptor (TC 1.A.4) family. As to quaternary structure, homotetramer. Interacts with TMEM100. Interacts with EGLN1. Interacts with the scorpion wasabi receptor toxin at the same site that electrophiles but in a non-covalent manner. In terms of processing, TRPA1 activation by electrophiles occurs though covalent modification of specific cysteine residues in the N-terminal cytoplasmic domain. Hydroxylation is required for TRPA1 activity inhibition in normoxia. In hypoxia, the decrease in oxygen concentration diminishes the activity of the hydroxylase EGLN1, thus relieving TRPA1 from inhibition and ultimately leading to channel activation. Post-translationally, oxidation of Cys-634 and Cys-859 in hyperoxia may override the hydroxylase EGLN1-mediated inhibition, causing TRPA1 activation. In terms of tissue distribution, expressed in inner ear (at protein level). Specifically expressed in a subset of nociceptive neurons. Expressed in the same neurons that TRPV1. In contrast, it is not expressed in neurons expressing TRPM8. Expressed in the superior cervical ganglion of vagus nerve. Expressed in the inferior ganglion (nodose ganglion) of vagus nerve. Expressed in dorsal root ganglia neurons.

The protein resides in the cell membrane. It carries out the reaction Ca(2+)(in) = Ca(2+)(out). The catalysed reaction is Mg(2+)(in) = Mg(2+)(out). It catalyses the reaction Na(+)(in) = Na(+)(out). The enzyme catalyses K(+)(in) = K(+)(out). It carries out the reaction Zn(2+)(in) = Zn(2+)(out). Electrophilic ligands activate the channel by covalent modification of intracellular cysteines. Cys-622 plays a key role in covalent binding of electrophiles. Extracellular Ca(2+) both potentiates and inactivates TRPA1; a rapid potentiation follows by slow desensitization. Activated by increase in intracellular Ca(2+) concentration. Inhibited by the potent blocker of TRPV channels ruthenium red, A-967079. Activated by icilin, sulfhydryl reactive agent MTSEA, N-methyl maleimide (NMM), and PF-4840154. Also activated by hyperoxia. Activated by intracellular Zn(2+). TRPA1 activation may critically depend on the presence of small intracellular compounds such as polyphosphates. In terms of biological role, ligand-activated Ca(2+)-permeable, nonselective cation channel. Involved in pain detection and possibly also in cold perception, oxygen concentration perception, cough, itch, and inner ear function. Has a relatively high Ca(2+) selectivity, with a preference for divalent over monovalent cations (Ca(2+) &gt; Ba(2+) &gt; Mg(2+) &gt; NH4(+) &gt; Li(+) &gt; K(+)), the influx of cation into the cytoplasm, leads to membrane depolarization. Has a central role in the pain response to endogenous inflammatory mediators, such as bradykinin and to a diverse array of irritants. Activated by a large variety of structurally unrelated electrophilic and non-electrophilic chemical compounds, such as allylthiocyanate (AITC) from mustard oil or wasabi, cinnamaldehyde, diallyl disulfide (DADS) from garlic, and acrolein, an environmental irritant. Electrophilic ligands activate TRPA1 by interacting with critical N-terminal Cys residues in a covalent manner. Non-electrophile agonists bind at distinct sites in the transmembrane domain to promote channel activation. Also acts as an ionotropic cannabinoid receptor by being activated by delta(9)-tetrahydrocannabinol (THC), the psychoactive component of marijuana. May be a component for the mechanosensitive transduction channel of hair cells in inner ear, thereby participating in the perception of sounds. The chain is Transient receptor potential cation channel subfamily A member 1 from Mus musculus (Mouse).